A 149-amino-acid polypeptide reads, in one-letter code: Histone H2A (149 aa).

Over residues 1–23 (METAGKAKKGFGGRKGGPRKKSV) the composition is skewed to basic residues. Disordered regions lie at residues 1–25 (META…SVTR) and 127–149 (KTAE…PKKA). Over residues 127 to 138 (KTAEKAAKEPKS) the composition is skewed to basic and acidic residues. 2 short sequence motifs (SPKK motif) span residues 138–141 (SPSK) and 145–148 (SPKK).

It belongs to the histone H2A family. The nucleosome is a histone octamer containing two molecules each of H2A, H2B, H3 and H4 assembled in one H3-H4 heterotetramer and two H2A-H2B heterodimers. The octamer wraps approximately 147 bp of DNA.

Its subcellular location is the nucleus. The protein localises to the chromosome. Its function is as follows. Core component of nucleosome. Nucleosomes wrap and compact DNA into chromatin, limiting DNA accessibility to the cellular machineries which require DNA as a template. Histones thereby play a central role in transcription regulation, DNA repair, DNA replication and chromosomal stability. DNA accessibility is regulated via a complex set of post-translational modifications of histones, also called histone code, and nucleosome remodeling. The polypeptide is Histone H2A (Petroselinum crispum (Parsley)).